A 452-amino-acid chain; its full sequence is Bifunctional protein GlmU (452 aa).

Residues 1–232 (MTTRTSLTIV…EDEVRGINTK (232 aa)) form a pyrophosphorylase region. UDP-N-acetyl-alpha-D-glucosamine-binding positions include 11–14 (LAAG), Lys25, Gln78, and 83–84 (GT). A Mg(2+)-binding site is contributed by Asp108. UDP-N-acetyl-alpha-D-glucosamine contacts are provided by Gly144, Glu158, Asn173, and Asn230. Residue Asn230 coordinates Mg(2+). The interval 233 to 253 (AQLAEAEAVMQTRLRQAAMTA) is linker. The tract at residues 254-452 (GVTLISPETI…SARARKPKTS (199 aa)) is N-acetyltransferase. UDP-N-acetyl-alpha-D-glucosamine is bound by residues Arg319 and Lys337. Residue His349 is the Proton acceptor of the active site. UDP-N-acetyl-alpha-D-glucosamine is bound by residues Tyr352 and Asn363. Acetyl-CoA is bound by residues Ala366, 372–373 (NY), Ser391, Ser409, and Arg426.

The protein in the N-terminal section; belongs to the N-acetylglucosamine-1-phosphate uridyltransferase family. In the C-terminal section; belongs to the transferase hexapeptide repeat family. Homotrimer. The cofactor is Mg(2+).

It localises to the cytoplasm. The enzyme catalyses alpha-D-glucosamine 1-phosphate + acetyl-CoA = N-acetyl-alpha-D-glucosamine 1-phosphate + CoA + H(+). It catalyses the reaction N-acetyl-alpha-D-glucosamine 1-phosphate + UTP + H(+) = UDP-N-acetyl-alpha-D-glucosamine + diphosphate. It participates in nucleotide-sugar biosynthesis; UDP-N-acetyl-alpha-D-glucosamine biosynthesis; N-acetyl-alpha-D-glucosamine 1-phosphate from alpha-D-glucosamine 6-phosphate (route II): step 2/2. Its pathway is nucleotide-sugar biosynthesis; UDP-N-acetyl-alpha-D-glucosamine biosynthesis; UDP-N-acetyl-alpha-D-glucosamine from N-acetyl-alpha-D-glucosamine 1-phosphate: step 1/1. The protein operates within bacterial outer membrane biogenesis; LPS lipid A biosynthesis. Catalyzes the last two sequential reactions in the de novo biosynthetic pathway for UDP-N-acetylglucosamine (UDP-GlcNAc). The C-terminal domain catalyzes the transfer of acetyl group from acetyl coenzyme A to glucosamine-1-phosphate (GlcN-1-P) to produce N-acetylglucosamine-1-phosphate (GlcNAc-1-P), which is converted into UDP-GlcNAc by the transfer of uridine 5-monophosphate (from uridine 5-triphosphate), a reaction catalyzed by the N-terminal domain. The protein is Bifunctional protein GlmU of Rhodopseudomonas palustris (strain BisB5).